A 301-amino-acid polypeptide reads, in one-letter code: Cilia- and flagella-associated protein 161 (301 aa).

Positions 269–301 are disordered; that stretch reads GNPRDASSSMLDLPKPPTEDTRAMEQAMGLDTQ.

As to quaternary structure, microtubule inner protein component of sperm flagellar doublet microtubules. In terms of tissue distribution, expressed in airway epithelial cells.

The protein resides in the cytoplasm. It localises to the cytoskeleton. Its subcellular location is the cilium axoneme. It is found in the flagellum axoneme. Functionally, microtubule inner protein (MIP) part of the dynein-decorated doublet microtubules (DMTs) in cilia axoneme, which is required for motile cilia beating. The chain is Cilia- and flagella-associated protein 161 from Homo sapiens (Human).